Consider the following 334-residue polypeptide: D-alanine--D-alanine ligase (334 aa).

The ATP-grasp domain occupies 114-314; the sequence is KRIWRFEGLP…YEELCLRILA (201 aa). 140 to 195 contributes to the ATP binding site; sequence LEDLGSPMIVKPSREGSTIGLTKVTSPGQCEQAYRLASRYDPEVLCEQFIEGEETT. 3 residues coordinate Mg(2+): aspartate 267, glutamate 281, and asparagine 283.

Belongs to the D-alanine--D-alanine ligase family. The cofactor is Mg(2+). Requires Mn(2+) as cofactor.

It localises to the cytoplasm. The enzyme catalyses 2 D-alanine + ATP = D-alanyl-D-alanine + ADP + phosphate + H(+). Its pathway is cell wall biogenesis; peptidoglycan biosynthesis. In terms of biological role, cell wall formation. This chain is D-alanine--D-alanine ligase, found in Paracidovorax citrulli (strain AAC00-1) (Acidovorax citrulli).